A 260-amino-acid polypeptide reads, in one-letter code: MNPYSVKLDTFEGPLDLLLHLINQAEVDIYDIPVALITEQYMAYIHTMQELQLDVASEYLVMAATLLQIKSKMLLPKQEEIFDETFEYEEEDPREELMFRLIEYRRYKEAAQELKEKEGERSQVHTRLPDNLDDYLTEEERQRQSIQGVTLFDMLAAYQKLLKRRAYSRPRTSTVKVEEYSIDERMTDILMDLEKCNGKCRFQDLFVEKGRGHMVVTFLAMLELMKTDAIYCEQNENFADIWIYRREGKNRDIERASSSH.

The protein belongs to the ScpA family. As to quaternary structure, component of a cohesin-like complex composed of ScpA, ScpB and the Smc homodimer, in which ScpA and ScpB bind to the head domain of Smc. The presence of the three proteins is required for the association of the complex with DNA.

It is found in the cytoplasm. Participates in chromosomal partition during cell division. May act via the formation of a condensin-like complex containing Smc and ScpB that pull DNA away from mid-cell into both cell halves. The protein is Segregation and condensation protein A of Halalkalibacterium halodurans (strain ATCC BAA-125 / DSM 18197 / FERM 7344 / JCM 9153 / C-125) (Bacillus halodurans).